The primary structure comprises 252 residues: Coenzyme F420:L-glutamate ligase (252 aa).

GTP-binding positions include 12-15, 44-45, and Lys-49; these read VPLE and HT. Asp-114 is an a divalent metal cation binding site. Asn-117 contacts GTP. A divalent metal cation contacts are provided by Asp-155, Thr-156, and Gln-213. 211–218 is a binding site for GTP; sequence MGQADEGT.

Belongs to the CofE family. In terms of assembly, homodimer. It depends on Mg(2+) as a cofactor. The cofactor is Mn(2+). K(+) is required as a cofactor.

It catalyses the reaction oxidized coenzyme F420-0 + GTP + L-glutamate = oxidized coenzyme F420-1 + GDP + phosphate + H(+). It carries out the reaction oxidized coenzyme F420-1 + GTP + L-glutamate = oxidized coenzyme F420-2 + GDP + phosphate + H(+). It functions in the pathway cofactor biosynthesis; coenzyme F420 biosynthesis. In terms of biological role, catalyzes the GTP-dependent successive addition of two or more gamma-linked L-glutamates to the L-lactyl phosphodiester of 7,8-didemethyl-8-hydroxy-5-deazariboflavin (F420-0) to form coenzyme F420-0-glutamyl-glutamate (F420-2) or polyglutamated F420 derivatives. This chain is Coenzyme F420:L-glutamate ligase, found in Methanopyrus kandleri (strain AV19 / DSM 6324 / JCM 9639 / NBRC 100938).